Here is an 841-residue protein sequence, read N- to C-terminus: Translation initiation factor IF-2 (841 aa).

The segment at 87–254 is disordered; the sequence is RKKKVFVQRS…KRNAHGFQSP (168 aa). A compositionally biased stretch (basic and acidic residues) spans 96 to 135; that stretch reads SPEEIEAERKREMDERRAVENAARQKAEEEAKRRAEEDAR. A compositionally biased stretch (low complexity) spans 136 to 175; the sequence is SQPAASQSAPAAAEPVAAAEPVREAAPAAAPAPASAAPSA. Basic and acidic residues-rich tracts occupy residues 176 to 217 and 225 to 234; these read DARK…EKAP and TTDEESDSFR. Residues 235-248 are compositionally biased toward basic residues; sequence RGGRGKGKLKKRNA. Positions 341–510 constitute a tr-type G domain; sequence SRAPVVTVMG…LLQAEVLELK (170 aa). Residues 350–357 form a G1 region; that stretch reads GHVDHGKT. 350 to 357 contacts GTP; that stretch reads GHVDHGKT. Residues 375-379 form a G2 region; it reads GITQH. Residues 396–399 are G3; that stretch reads DTPG. Residues 396–400 and 450–453 contribute to the GTP site; these read DTPGH and NKID. The interval 450-453 is G4; it reads NKID. The tract at residues 486–488 is G5; sequence SAK.

It belongs to the TRAFAC class translation factor GTPase superfamily. Classic translation factor GTPase family. IF-2 subfamily.

Its subcellular location is the cytoplasm. In terms of biological role, one of the essential components for the initiation of protein synthesis. Protects formylmethionyl-tRNA from spontaneous hydrolysis and promotes its binding to the 30S ribosomal subunits. Also involved in the hydrolysis of GTP during the formation of the 70S ribosomal complex. This is Translation initiation factor IF-2 from Pseudomonas syringae pv. syringae (strain B728a).